The primary structure comprises 121 residues: Dihydroneopterin aldolase (121 aa).

Substrate-binding positions include glutamate 22, tyrosine 54, and 73–74 (IE). Lysine 100 functions as the Proton donor/acceptor in the catalytic mechanism.

This sequence belongs to the DHNA family. Homooctamer. Four molecules assemble into a ring, and two rings come together to give a cylinder with a hole of at least 13 a diameter.

The enzyme catalyses 7,8-dihydroneopterin = 6-hydroxymethyl-7,8-dihydropterin + glycolaldehyde. It carries out the reaction 7,8-dihydroneopterin = 7,8-dihydromonapterin. It participates in cofactor biosynthesis; tetrahydrofolate biosynthesis; 2-amino-4-hydroxy-6-hydroxymethyl-7,8-dihydropteridine diphosphate from 7,8-dihydroneopterin triphosphate: step 3/4. Functionally, catalyzes the conversion of 7,8-dihydroneopterin to 6-hydroxymethyl-7,8-dihydropterin. Can also catalyze the epimerization of carbon 2' of dihydroneopterin to dihydromonapterin. The chain is Dihydroneopterin aldolase (folB) from Staphylococcus epidermidis (strain ATCC 35984 / DSM 28319 / BCRC 17069 / CCUG 31568 / BM 3577 / RP62A).